The primary structure comprises 117 residues: Large ribosomal subunit protein uL18 (117 aa).

The protein belongs to the universal ribosomal protein uL18 family. Part of the 50S ribosomal subunit; part of the 5S rRNA/L5/L18/L25 subcomplex. Contacts the 5S and 23S rRNAs.

Functionally, this is one of the proteins that bind and probably mediate the attachment of the 5S RNA into the large ribosomal subunit, where it forms part of the central protuberance. This Klebsiella pneumoniae subsp. pneumoniae (strain ATCC 700721 / MGH 78578) protein is Large ribosomal subunit protein uL18.